A 74-amino-acid chain; its full sequence is Peptide Im-4 (74 aa).

Positions 1–22 are cleaved as a signal peptide; it reads MKFQYLLAIFMIVLVVTDHCQA. Residue lysine 39 is modified to Lysine amide; partial. A propeptide spanning residues 40–74 is cleaved from the precursor; it reads GRRRRQLEARYEPQQRNFRKREIDFEKLFANMPDY.

This sequence belongs to the non-disulfide-bridged peptide (NDBP) superfamily. Short antimicrobial peptide (group 4) family. Expressed by the venom gland.

The protein localises to the secreted. Its subcellular location is the target cell membrane. Functionally, antimicrobial peptide that probably forms pores in target membranes. Has antibacterial activity against Gram-positive bacteria S.aureus NBRC 13276 (MIC=5-10 uM) and B.subtilis NBRC 3009 (MIC=2.5-5 uM) but not against Gram-negative bacterium E.coli NBRC 3972. This Isometrus maculatus (Lesser brown scorpion) protein is Peptide Im-4.